Here is a 162-residue protein sequence, read N- to C-terminus: SsrA-binding protein (162 aa).

It belongs to the SmpB family.

It is found in the cytoplasm. Its function is as follows. Required for rescue of stalled ribosomes mediated by trans-translation. Binds to transfer-messenger RNA (tmRNA), required for stable association of tmRNA with ribosomes. tmRNA and SmpB together mimic tRNA shape, replacing the anticodon stem-loop with SmpB. tmRNA is encoded by the ssrA gene; the 2 termini fold to resemble tRNA(Ala) and it encodes a 'tag peptide', a short internal open reading frame. During trans-translation Ala-aminoacylated tmRNA acts like a tRNA, entering the A-site of stalled ribosomes, displacing the stalled mRNA. The ribosome then switches to translate the ORF on the tmRNA; the nascent peptide is terminated with the 'tag peptide' encoded by the tmRNA and targeted for degradation. The ribosome is freed to recommence translation, which seems to be the essential function of trans-translation. The sequence is that of SsrA-binding protein from Shewanella frigidimarina (strain NCIMB 400).